Here is a 72-residue protein sequence, read N- to C-terminus: Protein RALF-like 20 (72 aa).

The N-terminal stretch at 1–27 (MVLSKKTIMQSFALMIILSIVMSTTEA) is a signal peptide. Intrachain disulfides connect Cys-43–Cys-51 and Cys-63–Cys-69.

Belongs to the plant rapid alkalinization factor (RALF) family.

It is found in the secreted. Its function is as follows. Cell signaling peptide that may regulate plant stress, growth, and development. Mediates a rapid alkalinization of extracellular space by mediating a transient increase in the cytoplasmic Ca(2+) concentration leading to a calcium-dependent signaling events through a cell surface receptor and a concomitant activation of some intracellular mitogen-activated protein kinases. The protein is Protein RALF-like 20 (RALFL20) of Arabidopsis thaliana (Mouse-ear cress).